A 429-amino-acid chain; its full sequence is WRKY transcription factor 44 (429 aa).

Positions Thr159–Pro223 form a DNA-binding region, WRKY 1. Zn(2+)-binding residues include Cys190, Cys195, His218, and His220. Disordered regions lie at residues Tyr214–Lys279 and Ala292–Leu348. 3 stretches are compositionally biased toward polar residues: residues Gln254–Asn275, Arg295–Cys313, and Ser334–Ser345. The WRKY 2 DNA-binding region spans Val343–Leu408. Zn(2+) is bound by residues Cys374, Cys379, His403, and His405. The segment covering Ser410–Pro422 has biased composition (low complexity). A disordered region spans residues Ser410 to Ile429.

It belongs to the WRKY group I family. As to expression, leaf promordia, trichomes, atrichoblasts, fertilized eggs, seed coat.

Its subcellular location is the nucleus. In terms of biological role, transcription factor. Interacts specifically with the W box (5'-(T)TGAC[CT]-3'), a frequently occurring elicitor-responsive cis-acting element. Regulates trichome development, production of mucilage and tannin in seed coats, and maybe root hair development. This Arabidopsis thaliana (Mouse-ear cress) protein is WRKY transcription factor 44 (WRKY44).